Consider the following 271-residue polypeptide: Aquaporin-1 (271 aa).

Over 1–11 (MASEFKKKIFW) the chain is Cytoplasmic. A helical membrane pass occupies residues 12–29 (RAVVAEFLAMTLFIFISI). The Extracellular segment spans residues 30-48 (GSALGFQYPVRNNQTSGAA). N-linked (GlcNAc...) asparagine glycosylation is present at Asn42. Residues 49-67 (QDNVKVSLAFGLSIATLAQ) form a helical membrane-spanning segment. Over 68–70 (SVG) the chain is Cytoplasmic. Residues 71–84 (HISGAHLNPAVTLG) lie within the membrane without spanning it. The NPA 1 motif lies at 78 to 80 (NPA). The Cytoplasmic portion of the chain corresponds to 85–92 (LLLSCQIS). A helical membrane pass occupies residues 93–111 (VLRAVMYIIAQCVGAIVAT). Topologically, residues 112 to 135 (AILSGITSSLPGNSLGLNSLAPGV) are extracellular. Residues 136-155 (DSGQGLGIEIIGTLQLVLCV) traverse the membrane as a helical segment. Residues 156–165 (LATTDRRRRD) lie on the Cytoplasmic side of the membrane. Residues 166-183 (LGGSAPLAIGFSVALGHL) traverse the membrane as a helical segment. Topologically, residues 184–188 (LAIDY) are extracellular. An intramembrane segment occupies 189–201 (TGCGINPARSFGS). Positions 194 to 196 (NPA) match the NPA 2 motif. The Extracellular portion of the chain corresponds to 202–208 (AVITHNF). Residues 209 to 226 (QDHWVFWVGPFIGGALAV) traverse the membrane as a helical segment. Topologically, residues 227 to 271 (LIYDFILAPRSSDLTDRVKVWTSGQVEEYDLDGDDINSRVEMKPK) are cytoplasmic. The residue at position 249 (Ser249) is a Phosphoserine. Tyr255 carries the post-translational modification Phosphotyrosine. Ser264 bears the Phosphoserine mark.

It belongs to the MIP/aquaporin (TC 1.A.8) family. As to quaternary structure, homotetramer; each monomer provides an independent water pore. Component of the ankyrin-1 complex in the erythrocyte, composed of ANK1, RHCE, RHAG, SLC4A1, EPB42, GYPA, GYPB and AQP1. Interacts with EPHB2; involved in endolymph production in the inner ear. Identified in a complex with STOM. Interacts (via the N-terminal) with ANK1 (via ANK 1-5 repeats). Interacts (via the C-terminal) with EPB42.

The protein localises to the cell membrane. It carries out the reaction H2O(in) = H2O(out). The enzyme catalyses nitric oxide(out) = nitric oxide(in). It catalyses the reaction CO2(out) = CO2(in). The catalysed reaction is glycerol(in) = glycerol(out). It carries out the reaction H2O2(out) = H2O2(in). The enzyme catalyses K(+)(in) = K(+)(out). It catalyses the reaction Na(+)(in) = Na(+)(out). In terms of biological role, forms a water channel that facilitates the transport of water across cell membranes, playing a crucial role in water homeostasis in various tissues. Could also be permeable to small solutes including hydrogen peroxide, glycerol and gases such as amonnia (NH3), nitric oxide (NO) and carbon dioxide (CO2). Recruited to the ankyrin-1 complex, a multiprotein complex of the erythrocyte membrane, it could be part of a CO2 metabolon, linking facilitated diffusion of CO2 across the membrane, anion exchange of Cl(-)/HCO3(-) and interconversion of dissolved CO2 and carbonic acid in the cytosol. In vitro, it shows non-selective gated cation channel activity and may be permeable to cations like K(+) and Na(+) in vivo. This is Aquaporin-1 from Sus scrofa (Pig).